The chain runs to 654 residues: GTP-binding protein 1 (654 aa).

Positions 1-16 (MASLASSQTEPNTSES) are enriched in polar residues. The segment at 1–44 (MASLASSQTEPNTSESPVPASMFSPEPDGEDSDCSLDGEPLRNG) is disordered. The span at 27 to 36 (PDGEDSDCSL) shows a compositional bias: acidic residues. The tr-type G domain maps to 147–377 (FLEVRVAVVG…FLNLLSPRSS (231 aa)). The segment at 156-163 (GNVDAGKS) is G1. Residue 156-163 (GNVDAGKS) coordinates GTP. The tract at residues 195-199 (GRTSS) is G2. The segment at 241 to 244 (DLAG) is G3. GTP is bound by residues 241–245 (DLAGH) and 297–300 (TKID). The tract at residues 297–300 (TKID) is G4. The G5 stretch occupies residues 355-357 (SNV). Positions 566 to 585 (TNNLPMNSKPPQQVKMQSTK) are enriched in polar residues. The tract at residues 566–654 (TNNLPMNSKP…GACTASTGGC (89 aa)) is disordered. Low complexity predominate over residues 609–620 (AAAIGVTAGAGA). Over residues 631–642 (GRRRGGQRHKVK) the composition is skewed to basic residues.

This sequence belongs to the TRAFAC class translation factor GTPase superfamily. Classic translation factor GTPase family. GTPBP1 subfamily.

Its subcellular location is the cytoplasm. In terms of biological role, promotes degradation of target mRNA species. Plays a role in the regulation of circadian mRNA stability. Binds GTP and has GTPase activity. The polypeptide is GTP-binding protein 1 (gtpbp1) (Xenopus laevis (African clawed frog)).